We begin with the raw amino-acid sequence, 141 residues long: Large-conductance mechanosensitive channel (141 aa).

The next 3 membrane-spanning stretches (helical) occupy residues Val-14–Leu-34, Ile-38–Gly-58, and Gly-81–Val-101.

Belongs to the MscL family. Homopentamer.

The protein resides in the cell inner membrane. Its function is as follows. Channel that opens in response to stretch forces in the membrane lipid bilayer. May participate in the regulation of osmotic pressure changes within the cell. This chain is Large-conductance mechanosensitive channel, found in Rhizobium rhizogenes (strain K84 / ATCC BAA-868) (Agrobacterium radiobacter).